The chain runs to 405 residues: Neisseria adhesin A (405 aa).

The first 23 residues, 1 to 23 (MKHFPSKVLTTAILATFCSGALA), serve as a signal peptide directing secretion. Residues 24–87 (ATNDDDVKKA…ADDFKGLGLK (64 aa)) form a head domain region. 2 coiled-coil regions span residues 87–170 (KKVV…KLEA) and 181–329 (AFND…LRKE). The interval 88-350 (KVVTNLTKTV…SGLFQPYNVG (263 aa)) is coiled stalk domain. Positions 312–350 (HDTRLNGLDKTVSDLRKETRQGLAEQAALSGLFQPYNVG) are outer membrane translocation of the passenger domain. The next 4 beta stranded transmembrane spans lie at 350–360 (GRFNVTAAVGG), 364–375 (ESAVAIGTGFRF), 382–388 (KAGVAVG), and 394–405 (SAAYHVGVNYEW). A translocator domain region spans residues 351-405 (RFNVTAAVGGYKSESAVAIGTGFRFTENFAAKAGVAVGTSSGSSAAYHVGVNYEW).

This sequence belongs to the autotransporter-2 (AT-2) (TC 1.B.40) family. As to quaternary structure, the non-membrane anchored protein (residues 24-350) probably forms a homotrimer; it is assumed the mature protein forms trimers in situ. The mature protein without the membrane-targeting segment (residues 24-350) binds to human heat shock 90 beta protein (HSP90AB1) both in vitro and when incubated with human monocytes. A subsequent paper showed binding of the same fragment in epithelial cells to both HSP90AA1 and HSP90AB1; in vitro the interaction is stabilized by ADP and the Hsp90 inhibitor 17-AAG (17-N-allylamino-17-demethoxygeldanamycin), in vitro and in vivo both interactions are inhibited by ATP. Binds human oxidized low-density lipoprotein receptor 1 (LOX-1, OLR1) in protein microarrays, in solution and when LOX-1 is expressed on the cell surface. Binds via the head and the beginning of the coiled stalk (residues 24-170); binding can be abrogated by monoclonal antibodies against those specific regions of NadA. Other potential binding partners were identified but not characterized in the same study. Forms high molecular weight oligomers in whole cell extracts that are not disrupted by boiling in SDS buffer.

The protein resides in the cell outer membrane. It is found in the cell surface. In terms of biological role, adheres to and induces bacterial uptake by human epithelial cells in a microfilament-dependent process. Binding is reduced by pronase treatment, suggesting there is a protein receptor on the human cells. Possible human protein receptors include integrin beta-1 (ITGB1) and oxidized low-density lipoprotein receptor 1 (OLR1). Binds to extracellular human Hsp90 (preferentially the beta isoform, HSP90AB1) on monocytes, binding stimulates monocytes in a TLR4-dependent fashion, polymixin B, which binds NadA, blocks the activation. Hsp90 is probably not the first receptor on human monocytes. Non-membrane anchored protein (residues 24-350) is internalized into human epithelial cells by hijacking the endosome recycling pathway and may be recycled back to the cell surface, which might aid transcellular trafficking of the bacteria. A bacterial cell surface protein; antisera against this protein induce complement-mediated killing of this and other strains. This is Neisseria adhesin A from Neisseria meningitidis serogroup B.